Reading from the N-terminus, the 591-residue chain is Aspartate--tRNA(Asp/Asn) ligase (591 aa).

E174 is a binding site for L-aspartate. Positions 198 to 201 are aspartate; the sequence is QLFK. R220 is an L-aspartate binding site. Residues 220–222 and Q229 each bind ATP; that span reads RDE. H450 provides a ligand contact to L-aspartate. E483 serves as a coordination point for ATP. R490 is a binding site for L-aspartate. 535-538 is a binding site for ATP; that stretch reads GLDR.

Belongs to the class-II aminoacyl-tRNA synthetase family. Type 1 subfamily. As to quaternary structure, homodimer.

Its subcellular location is the cytoplasm. The enzyme catalyses tRNA(Asx) + L-aspartate + ATP = L-aspartyl-tRNA(Asx) + AMP + diphosphate. In terms of biological role, aspartyl-tRNA synthetase with relaxed tRNA specificity since it is able to aspartylate not only its cognate tRNA(Asp) but also tRNA(Asn). Reaction proceeds in two steps: L-aspartate is first activated by ATP to form Asp-AMP and then transferred to the acceptor end of tRNA(Asp/Asn). The chain is Aspartate--tRNA(Asp/Asn) ligase from Pseudomonas syringae pv. tomato (strain ATCC BAA-871 / DC3000).